The following is a 692-amino-acid chain: Formate hydrogenlyase transcriptional activator (692 aa).

Positions 202-344 constitute a GAF domain; the sequence is DIDELVSEVA…QIAERVAIAV (143 aa). Residues 381-610 enclose the Sigma-54 factor interaction domain; it reads IIGRSEAMYN…LENVVERAVL (230 aa). ATP is bound by residues 409-416 and 472-481; these read GETGTGKE and ADKSSLFLDE. Positions 663-682 form a DNA-binding region, H-T-H motif; that stretch reads PKGAAQRLGLKRTTLLSRMK.

In terms of biological role, required for induction of expression of the formate dehydrogenase H and hydrogenase-3 structural genes. The sequence is that of Formate hydrogenlyase transcriptional activator (fhlA) from Salmonella typhimurium (strain LT2 / SGSC1412 / ATCC 700720).